The primary structure comprises 124 residues: MAAYLLAVAILFCIQGWPSGTVQGQAMPFMEVYTRSACQTRETLVSILEEHPHEISHLFKPSCVTVLRCGGCCSDESLTCTSTGKRSVGREIMRVDPHKETSKIEVMQFTEHTDCECRPQSASG.

Residues 1–24 (MAAYLLAVAILFCIQGWPSGTVQG) form the signal peptide. Pyrrolidone carboxylic acid is present on Q25. Disulfide bonds link C38/C80, C69/C115, and C73/C117.

The protein belongs to the PDGF/VEGF growth factor family. Snake venom VEGF subfamily. In terms of assembly, homodimer; disulfide-linked. Interacts with VEGF receptor-1 (FLT1) with a high affinity, whereas it binds to VEGF receptor-2 (KDR) with a low affinity. Does not bind VEGF receptor-3 (FLT4). Expressed by the venom gland.

It is found in the secreted. Its function is as follows. Snake venom VEGFs that may contribute to venom dispersion and prey subjugation by inducing vascular permeability and hypotension. This protein induces an increase in capillary permeability after intradermal injection, as well as a drastic hypotensive effect after intravenous injection. The hypotension is mediated by nitric oxide (NO), which is produced by VEGF-activated endothelium NO synthase. Also induces angiogenesis in vitro. Like other crotalid VEGFs, this protein interacts with VEGF receptor-1 (FLT1) with a high affinity, whereas it binds to VEGF receptor-2 (KDR) with a low affinity. The protein is Snake venom vascular endothelial growth factor toxin apiscin of Agkistrodon piscivorus piscivorus (Eastern cottonmouth).